A 68-amino-acid chain; its full sequence is Large ribosomal subunit protein bL35 (68 aa).

It belongs to the bacterial ribosomal protein bL35 family.

This is Large ribosomal subunit protein bL35 from Pelagibacter ubique (strain HTCC1062).